Reading from the N-terminus, the 90-residue chain is Probable Fe(2+)-trafficking protein (90 aa).

The protein belongs to the Fe(2+)-trafficking protein family. Monomer.

Functionally, could be a mediator in iron transactions between iron acquisition and iron-requiring processes, such as synthesis and/or repair of Fe-S clusters in biosynthetic enzymes. The sequence is that of Probable Fe(2+)-trafficking protein from Serratia proteamaculans (strain 568).